Here is a 126-residue protein sequence, read N- to C-terminus: uncharacterized protein (126 aa).

In terms of domain architecture, HIT spans 19–126 (IFERIIEGAV…LGGGLLGSIA (108 aa)). The short motif at 111–115 (HLHIH) is the Histidine triad motif element.

This is an uncharacterized protein from Chlamydia muridarum (strain MoPn / Nigg).